A 322-amino-acid polypeptide reads, in one-letter code: Delta-aminolevulinic acid dehydratase (322 aa).

Zn(2+)-binding residues include C120, C122, and C130. K195 functions as the Schiff-base intermediate with substrate in the catalytic mechanism. 2 residues coordinate 5-aminolevulinate: R205 and R217. Mg(2+) is bound at residue E233. The active-site Schiff-base intermediate with substrate is the K248. Residues S274 and Y312 each contribute to the 5-aminolevulinate site.

This sequence belongs to the ALAD family. In terms of assembly, homooctamer. It depends on Zn(2+) as a cofactor.

It carries out the reaction 2 5-aminolevulinate = porphobilinogen + 2 H2O + H(+). It functions in the pathway porphyrin-containing compound metabolism; protoporphyrin-IX biosynthesis; coproporphyrinogen-III from 5-aminolevulinate: step 1/4. In terms of biological role, catalyzes an early step in the biosynthesis of tetrapyrroles. Binds two molecules of 5-aminolevulinate per subunit, each at a distinct site, and catalyzes their condensation to form porphobilinogen. The polypeptide is Delta-aminolevulinic acid dehydratase (hemB) (Archaeoglobus fulgidus (strain ATCC 49558 / DSM 4304 / JCM 9628 / NBRC 100126 / VC-16)).